The following is a 3424-amino-acid chain: Genome polyprotein (3424 aa).

The segment at 2 to 15 (SKKPGKSAAKRTVN) is interaction with host EXOC1. At 2–101 (SKKPGKSAAK…SVNKRKEKKK (100 aa)) the chain is on the cytoplasmic side. The interval 35-70 (MLDVRGAPRLILALMAFFRFAAIKPTLGLKKRWRSV) is hydrophobic; homodimerization of capsid protein C. Positions 102-118 (SFSTALLWITMITAVAG) are cleaved as a propeptide — ER anchor for the capsid protein C, removed in mature form by serine protease NS3. The chain crosses the membrane as a helical span at residues 102–122 (SFSTALLWITMITAVAGLKIS). Over 123 to 244 (SHRDRPLLMV…TTKYLTKVEN (122 aa)) the chain is Extracellular. Asparagine 133 carries an N-linked (GlcNAc...) asparagine; by host glycan. Residues 245-265 (WVIRNPGYALVALATAWMLGS) form a helical membrane-spanning segment. Residues 266 to 270 (NTPQR) are Cytoplasmic-facing. A helical membrane pass occupies residues 271 to 285 (VVFMIMMMLIAPAYS). Topologically, residues 286–738 (LNCLGISNRD…GVFGTAFRSL (453 aa)) are extracellular. Disulfide bonds link cysteine 288/cysteine 315, cysteine 345/cysteine 401, cysteine 345/cysteine 406, cysteine 359/cysteine 390, cysteine 377/cysteine 401, cysteine 377/cysteine 406, cysteine 475/cysteine 573, and cysteine 590/cysteine 621. The segment at 383 to 396 (DRGWGNGCGLFGKG) is fusion peptide. The chain crosses the membrane as a helical span at residues 739-759 (FGGMSWVTQALMGALLLWLGI). The Cytoplasmic segment spans residues 760–765 (SARERT). The helical transmembrane segment at 766–786 (VSLIMLSVGGILLFLAVNVHA) threads the bilayer. Residues 787–1170 (DTGCAIDMAR…EVLRRRWTAN (384 aa)) lie on the Extracellular side of the membrane. 8 disulfides stabilise this stretch: cysteine 790/cysteine 801, cysteine 841/cysteine 929, cysteine 965/cysteine 1009, cysteine 1067/cysteine 1116, cysteine 1078/cysteine 1099, cysteine 1078/cysteine 1100, cysteine 1099/cysteine 1103, and cysteine 1100/cysteine 1103. N-linked (GlcNAc...) asparagine; by host glycans are attached at residues asparagine 916 and asparagine 993. The chain crosses the membrane as a helical span at residues 1171 to 1191 (LALPTSALLMACFIFGGFTYL). Residues 1192–1213 (DLFRYFILVGAAFAEANSGGDV) are Cytoplasmic-facing. Residues 1214 to 1234 (VHLAMIAAFNIQPVALVTTFF) form a helical membrane-spanning segment. Topologically, residues 1235–1276 (RKNWTNRENMILIIAAACTQMACMELKIELFHVMNSLSLAWM) are lumenal. The chain crosses the membrane as a helical span at residues 1277–1297 (ILKALTTGTTSTLAMPFLAAL). Topologically, residues 1298–1302 (SPPMN) are cytoplasmic. Residues 1303–1323 (WLGLDVVRCLLIMAGVAALIS) traverse the membrane as a helical segment. The Lumenal segment spans residues 1324–1333 (ERRESLAKKK). The chain crosses the membrane as a helical span at residues 1334–1354 (GALLISAALALTGAFSPLVLQ). The Cytoplasmic portion of the chain corresponds to 1355 to 1367 (GALMFTQSLGKRG). The chain crosses the membrane as a helical span at residues 1368–1388 (WPASEVLTAVGMTFALAGSVA). The Lumenal portion of the chain corresponds to 1389–1391 (RLD). Residues 1392–1412 (GGTMAIPLATMAILAVAYVLS) traverse the membrane as a helical segment. Residues 1413–1469 (GKSTDMWLERCADISWINEAEITGTSPRLDVELDSNGDFKMINDPGVPMWMWTCRMG) are Cytoplasmic-facing. The segment at 1420–1459 (LERCADISWINEAEITGTSPRLDVELDSNGDFKMINDPGV) is interacts with and activates NS3 protease. The helical intramembrane region spans 1470–1490 (LMAMAAYNPVLIPVSMAGYWM). At 1491-2167 (TVKIHKRGGV…ALEELPDTVE (677 aa)) the chain is on the cytoplasmic side. The Peptidase S7 domain maps to 1498–1675 (GGVMWDVPAP…ERQEEETPEA (178 aa)). Catalysis depends on charge relay system; for serine protease NS3 activity residues histidine 1548, aspartate 1572, and serine 1632. The Helicase ATP-binding domain maps to 1678–1834 (PDMLKKRRLT…DSNAPIIDQE (157 aa)). The important for RNA-binding stretch occupies residues 1682 to 1685 (KKRR). 1691 to 1698 (LHPGAGKT) contacts ATP. A DEAH box motif is present at residues 1782–1785 (DEAH). The Helicase C-terminal domain occupies 1845–2009 (GFEWITEYTG…GLVAQLYGPE (165 aa)). An N6-acetyllysine; by host modification is found at lysine 1886. The segment at 1944-1969 (APITPASAAQRRGRIGRDPTQSGDEY) is disordered. A regulates the ATPase activity of NS3 helicase region spans residues 2160-2164 (EELPD). A helical transmembrane segment spans residues 2168-2188 (TILLMTMMCVASLGMFTLMVH). The Lumenal segment spans residues 2189–2190 (RR). The helical intramembrane region spans 2191-2211 (GLGKTGLGTLVLATVTVLLWI). Residues 2212–2213 (SD) are Lumenal-facing. Residues 2214-2234 (VPAPKIAGVLLIAFLLMIVLI) traverse the membrane as a helical segment. Over 2235–2249 (PEPEKQRSQTDNHLA) the chain is Cytoplasmic. A helical transmembrane segment spans residues 2250–2264 (IFLVCVLLLIGAVSA). The Lumenal portion of the chain corresponds to 2265 to 2299 (NEMGWLETTKKDIGKLFRSSGDTQEQSTWQSWAPE). Residues 2300–2320 (VRAATAWAGYAGLTVFLTPLF) constitute an intramembrane region (helical). Residues 2321–2342 (RHLITTQYVSFSLTAITAQASA) are Lumenal-facing. A helical membrane pass occupies residues 2343–2363 (LFGLSAGYPFVGIDLAVGFLL). The Cytoplasmic segment spans residues 2364–2371 (LGCYGQYN). The chain crosses the membrane as a helical span at residues 2372–2392 (LPTAVATGLLLLAHYGYMIPG). Residues 2393 to 2439 (WQAEAMRAAQKRTAAGVMKNAVVDGIVATDIPEVDTATPITEKKLGQ) lie on the Lumenal side of the membrane. Residues 2440-2460 (ILLILLCGASLLVKFDTMVLV) traverse the membrane as a helical segment. Topologically, residues 2461–3424 (EAGVLTTSAM…PSPVLFTGAI (964 aa)) are cytoplasmic. The 265-residue stretch at 2520 to 2784 (GGGSAPTLGE…DVCLGSGTRA (265 aa)) folds into the mRNA cap 0-1 NS5-type MT domain. Residue serine 2575 participates in S-adenosyl-L-methionine binding. Serine 2575 carries the post-translational modification Phosphoserine. The active-site For 2'-O-MTase activity is lysine 2580. 6 residues coordinate S-adenosyl-L-methionine: glycine 2605, tryptophan 2606, threonine 2623, lysine 2624, aspartate 2650, and valine 2651. The For 2'-O-MTase activity role is filled by aspartate 2665. Residue isoleucine 2666 participates in S-adenosyl-L-methionine binding. Residues lysine 2700 and glutamate 2736 each act as for 2'-O-MTase activity in the active site. Tyrosine 2738 is an S-adenosyl-L-methionine binding site. The Zn(2+) site is built by glutamate 2958, histidine 2962, cysteine 2967, and cysteine 2970. Residues 3048–3200 (GNMFADDTAG…KPIDDRFASA (153 aa)) form the RdRp catalytic domain. Residues histidine 3235, cysteine 3251, and cysteine 3370 each coordinate Zn(2+).

In the N-terminal section; belongs to the class I-like SAM-binding methyltransferase superfamily. mRNA cap 0-1 NS5-type methyltransferase family. Homodimer. Interacts (via N-terminus) with host EXOC1 (via C-terminus); this interaction results in EXOC1 degradation through the proteasome degradation pathway. As to quaternary structure, forms heterodimers with envelope protein E in the endoplasmic reticulum and Golgi. In terms of assembly, homodimer; in the endoplasmic reticulum and Golgi. Interacts with protein prM. Interacts with non-structural protein 1. Homodimer; Homohexamer when secreted. Interacts with envelope protein E. NS1 interacts with NS4B. Interacts with host complement protein CFH; this interaction leads to the degradation of C3. As to quaternary structure, interacts (via N-terminus) with serine protease NS3. In terms of assembly, forms a heterodimer with serine protease NS3. May form homooligomers. Forms a heterodimer with NS2B. Interacts with non-structural protein 2A (via N-terminus). Interacts with NS4B. Interacts with unphosphorylated RNA-directed RNA polymerase NS5; this interaction stimulates RNA-directed RNA polymerase NS5 guanylyltransferase activity. As to quaternary structure, interacts with serine protease NS3. In terms of assembly, homodimer. Interacts with host STAT2; this interaction inhibits the phosphorylation of the latter, and, when all viral proteins are present (polyprotein), targets STAT2 for degradation. Interacts with serine protease NS3. In terms of processing, specific enzymatic cleavages in vivo yield mature proteins. Cleavages in the lumen of endoplasmic reticulum are performed by host signal peptidase, whereas cleavages in the cytoplasmic side are performed by serine protease NS3. Signal cleavage at the 2K-4B site requires a prior NS3 protease-mediated cleavage at the 4A-2K site. Post-translationally, cleaved in post-Golgi vesicles by a host furin, releasing the mature small envelope protein M, and peptide pr. This cleavage is incomplete as up to 30% of viral particles still carry uncleaved prM. N-glycosylated. In terms of processing, N-glycosylated. The excreted form is glycosylated and this is required for efficient secretion of the protein from infected cells. Post-translationally, acetylated by host KAT5. Acetylation modulates NS3 RNA-binding and unwinding activities and plays an important positive role for viral replication. Phosphorylated on serines residues. This phosphorylation may trigger NS5 nuclear localization.

The protein resides in the virion. Its subcellular location is the host nucleus. It is found in the host cytoplasm. The protein localises to the host perinuclear region. It localises to the secreted. The protein resides in the virion membrane. Its subcellular location is the host endoplasmic reticulum membrane. It carries out the reaction Selective hydrolysis of -Xaa-Xaa-|-Yaa- bonds in which each of the Xaa can be either Arg or Lys and Yaa can be either Ser or Ala.. The catalysed reaction is RNA(n) + a ribonucleoside 5'-triphosphate = RNA(n+1) + diphosphate. The enzyme catalyses a ribonucleoside 5'-triphosphate + H2O = a ribonucleoside 5'-diphosphate + phosphate + H(+). It catalyses the reaction ATP + H2O = ADP + phosphate + H(+). It carries out the reaction a 5'-end (5'-triphosphoguanosine)-ribonucleoside in mRNA + S-adenosyl-L-methionine = a 5'-end (N(7)-methyl 5'-triphosphoguanosine)-ribonucleoside in mRNA + S-adenosyl-L-homocysteine. The catalysed reaction is a 5'-end (N(7)-methyl 5'-triphosphoguanosine)-ribonucleoside in mRNA + S-adenosyl-L-methionine = a 5'-end (N(7)-methyl 5'-triphosphoguanosine)-(2'-O-methyl-ribonucleoside) in mRNA + S-adenosyl-L-homocysteine + H(+). Its function is as follows. Plays a role in virus budding by binding to the cell membrane and gathering the viral RNA into a nucleocapsid that forms the core of a mature virus particle. During virus entry, may induce genome penetration into the host cytoplasm after hemifusion induced by the surface proteins. Can migrate to the cell nucleus where it modulates host functions. Overcomes the anti-viral effects of host EXOC1 by sequestering and degrading the latter through the proteasome degradation pathway. Inhibits RNA silencing by interfering with host Dicer. In terms of biological role, prevents premature fusion activity of envelope proteins in trans-Golgi by binding to envelope protein E at pH6.0. After virion release in extracellular space, gets dissociated from E dimers. Functionally, acts as a chaperone for envelope protein E during intracellular virion assembly by masking and inactivating envelope protein E fusion peptide. prM is the only viral peptide matured by host furin in the trans-Golgi network probably to avoid catastrophic activation of the viral fusion activity in acidic Golgi compartment prior to virion release. prM-E cleavage is inefficient, and many virions are only partially matured. These uncleaved prM would play a role in immune evasion. Its function is as follows. May play a role in virus budding. Exerts cytotoxic effects by activating a mitochondrial apoptotic pathway through M ectodomain. May display a viroporin activity. Binds to host cell surface receptor and mediates fusion between viral and cellular membranes. Envelope protein is synthesized in the endoplasmic reticulum in the form of heterodimer with protein prM. They play a role in virion budding in the ER, and the newly formed immature particle is covered with 60 spikes composed of heterodimer between precursor prM and envelope protein E. The virion is transported to the Golgi apparatus where the low pH causes dissociation of PrM-E heterodimers and formation of E homodimers. prM-E cleavage is inefficient, and many virions are only partially matured. These uncleaved prM would play a role in immune evasion. In terms of biological role, involved in immune evasion, pathogenesis and viral replication. Once cleaved off the polyprotein, is targeted to three destinations: the viral replication cycle, the plasma membrane and the extracellular compartment. Essential for viral replication. Required for formation of the replication complex and recruitment of other non-structural proteins to the ER-derived membrane structures. Excreted as a hexameric lipoparticle that plays a role against host immune response. Antagonizing the complement function. Binds to the host macrophages and dendritic cells. Inhibits signal transduction originating from Toll-like receptor 3 (TLR3). Functionally, component of the viral RNA replication complex that functions in virion assembly and antagonizes the host alpha/beta interferon antiviral response. Its function is as follows. Required cofactor for the serine protease function of NS3. May have membrane-destabilizing activity and form viroporins. Displays three enzymatic activities: serine protease, NTPase and RNA helicase. NS3 serine protease, in association with NS2B, performs its autocleavage and cleaves the polyprotein at dibasic sites in the cytoplasm: C-prM, NS2A-NS2B, NS2B-NS3, NS3-NS4A, NS4A-2K and NS4B-NS5. NS3 RNA helicase binds RNA and unwinds dsRNA in the 3' to 5' direction. In terms of biological role, regulates the ATPase activity of the NS3 helicase activity. NS4A allows NS3 helicase to conserve energy during unwinding. Functionally, functions as a signal peptide for NS4B and is required for the interferon antagonism activity of the latter. Its function is as follows. Induces the formation of ER-derived membrane vesicles where the viral replication takes place. Inhibits interferon (IFN)-induced host STAT1 phosphorylation and nuclear translocation, thereby preventing the establishment of cellular antiviral state by blocking the IFN-alpha/beta pathway. Inhibits STAT2 translocation in the nucleus after IFN-alpha treatment. Replicates the viral (+) and (-) RNA genome, and performs the capping of genomes in the cytoplasm. NS5 methylates viral RNA cap at guanine N-7 and ribose 2'-O positions. Besides its role in RNA genome replication, also prevents the establishment of cellular antiviral state by blocking the interferon-alpha/beta (IFN-alpha/beta) signaling pathway. Inhibits host TYK2 and STAT2 phosphorylation, thereby preventing activation of JAK-STAT signaling pathway. This Aedes sp. (Human) protein is Genome polyprotein.